A 393-amino-acid chain; its full sequence is tRNA(Met) cytidine acetate ligase (393 aa).

The ATP site is built by G81, N142, and R167.

The protein belongs to the TmcAL family.

It is found in the cytoplasm. It carries out the reaction cytidine(34) in elongator tRNA(Met) + acetate + ATP = N(4)-acetylcytidine(34) in elongator tRNA(Met) + AMP + diphosphate. Its function is as follows. Catalyzes the formation of N(4)-acetylcytidine (ac(4)C) at the wobble position of elongator tRNA(Met), using acetate and ATP as substrates. First activates an acetate ion to form acetyladenylate (Ac-AMP) and then transfers the acetyl group to tRNA to form ac(4)C34. This chain is tRNA(Met) cytidine acetate ligase, found in Bacillus cereus (strain AH820).